Consider the following 210-residue polypeptide: ATP-dependent Clp protease proteolytic subunit (210 aa).

Ser-106 serves as the catalytic Nucleophile. Residue His-131 is part of the active site.

This sequence belongs to the peptidase S14 family. Fourteen ClpP subunits assemble into 2 heptameric rings which stack back to back to give a disk-like structure with a central cavity, resembling the structure of eukaryotic proteasomes.

It localises to the cytoplasm. It catalyses the reaction Hydrolysis of proteins to small peptides in the presence of ATP and magnesium. alpha-casein is the usual test substrate. In the absence of ATP, only oligopeptides shorter than five residues are hydrolyzed (such as succinyl-Leu-Tyr-|-NHMec, and Leu-Tyr-Leu-|-Tyr-Trp, in which cleavage of the -Tyr-|-Leu- and -Tyr-|-Trp bonds also occurs).. Functionally, cleaves peptides in various proteins in a process that requires ATP hydrolysis. Has a chymotrypsin-like activity. Plays a major role in the degradation of misfolded proteins. The sequence is that of ATP-dependent Clp protease proteolytic subunit from Bartonella tribocorum (strain CIP 105476 / IBS 506).